Here is a 238-residue protein sequence, read N- to C-terminus: MGALLAFCLLVGLLRWGPAGAQQPGEYCHGWVDAQGNYHEGFQCPEDFDTQDATICCGSCALRYCCAAADARLEQGGCTNDRGELEHPGITAQPVYVPFLIVGSIFIAFIILGSLVAIYCCTCLRPKEPSQQPIRFSLRSYQTETLPMILTSTSLRAASRQSSTATSSSSTGGSVRRFSFARAEPSCLVPSSPPPYTTGHTIHLTQPSGFLVSPQYFAYPLQQEPPLPGKSCPDFSSS.

The N-terminal stretch at 1–21 (MGALLAFCLLVGLLRWGPAGA) is a signal peptide. The Lumenal segment spans residues 22-98 (QQPGEYCHGW…GITAQPVYVP (77 aa)). Residues 99–119 (FLIVGSIFIAFIILGSLVAIY) form a helical membrane-spanning segment. Over 120–238 (CCTCLRPKEP…GKSCPDFSSS (119 aa)) the chain is Cytoplasmic.

It belongs to the shisa family.

Its subcellular location is the endoplasmic reticulum membrane. Plays an essential role in the maturation of presomitic mesoderm cells by individual attenuation of both FGF and WNT signaling. This is Protein shisa-3 homolog (Shisa3) from Mus musculus (Mouse).